We begin with the raw amino-acid sequence, 151 residues long: Phosphopantetheine adenylyltransferase (151 aa).

Residue Thr9 coordinates substrate. ATP contacts are provided by residues 9-10 (TF) and His17. Substrate-binding residues include Lys41, Thr73, and Arg87. Residues 88 to 90 (GIR), Glu98, and 122 to 128 (LTSISST) each bind ATP.

Belongs to the bacterial CoaD family. In terms of assembly, homohexamer. Requires Mg(2+) as cofactor.

It localises to the cytoplasm. It catalyses the reaction (R)-4'-phosphopantetheine + ATP + H(+) = 3'-dephospho-CoA + diphosphate. Its pathway is cofactor biosynthesis; coenzyme A biosynthesis; CoA from (R)-pantothenate: step 4/5. Functionally, reversibly transfers an adenylyl group from ATP to 4'-phosphopantetheine, yielding dephospho-CoA (dPCoA) and pyrophosphate. This chain is Phosphopantetheine adenylyltransferase, found in Phocaeicola vulgatus (strain ATCC 8482 / DSM 1447 / JCM 5826 / CCUG 4940 / NBRC 14291 / NCTC 11154) (Bacteroides vulgatus).